The chain runs to 305 residues: MGLQPSPVLLASLGVGLLTLLGVALGAYLVRRSRRPPVTLLDPNEKYQLRLLDKTTVNHNTKRFRFALPTAHHVLGLPVGKHVYLSARIDGSLVIRPYTPVTSDEDQGYVDLVIKVYLKGVHPKFPEGGKMSQYLDSLKIGDVVEFRGPSGLLTYAGKGKFNIQPNKKAPPEARVARNLGMIAGGTGITPMLQLIRAILKDPEDPTQCFLLFANQTEKDIILREDLEELQARHPGRFKLWFTLDHPPEGWAYSKGFVSVDMIREHLPAPGEDVLLLLCGPPPMVQLACHPSLDKLGYSPKMRFTY.

Residues 8-28 (VLLASLGVGLLTLLGVALGAY) form a helical membrane-spanning segment. The region spanning 44 to 156 (NEKYQLRLLD…RGPSGLLTYA (113 aa)) is the FAD-binding FR-type domain. FAD is bound by residues 136 to 166 (DSLKIGDVVEFRGPSGLLTYAGKGKFNIQPN) and 175 to 210 (VARNLGMIAGGTGITPMLQLIRAILKDPEDPTQCFL).

Belongs to the flavoprotein pyridine nucleotide cytochrome reductase family. FAD serves as cofactor.

Its subcellular location is the membrane. It carries out the reaction 2 Fe(III)-[cytochrome b5] + NADH = 2 Fe(II)-[cytochrome b5] + NAD(+) + H(+). In terms of biological role, NADH-cytochrome b5 reductases are involved in desaturation and elongation of fatty acids, cholesterol biosynthesis, drug metabolism, and, in erythrocyte, methemoglobin reduction. This is NADH-cytochrome b5 reductase 1 (CYB5R1) from Bos taurus (Bovine).